Here is a 418-residue protein sequence, read N- to C-terminus: Putative ion-transport protein YfeO (418 aa).

12 helical membrane-spanning segments follow: residues 10-30 (LLLS…LIVV), 54-74 (DSPF…GLVI), 99-119 (ALPG…SLGP), 120-140 (EHPI…RLLP), 149-169 (ILAS…AALI), 186-206 (LFAP…FFHP), 223-243 (ILSG…AVWC), 258-278 (VLML…AGPV), 300-320 (DYFL…ASGF), 322-342 (GGRI…LHEH), 343-363 (VPAV…VLVV), and 371-391 (LFMA…CIVM).

This sequence belongs to the chloride channel (TC 2.A.49) family.

The protein resides in the cell membrane. The chain is Putative ion-transport protein YfeO from Escherichia coli (strain SMS-3-5 / SECEC).